Consider the following 152-residue polypeptide: Cell division protein SepF (152 aa).

A compositionally biased stretch (basic and acidic residues) spans 23 to 32 (EVAREPEPMQ). A disordered region spans residues 23 to 42 (EVAREPEPMQKKTKKEKPSK).

This sequence belongs to the SepF family. As to quaternary structure, homodimer. Interacts with FtsZ.

It is found in the cytoplasm. Its function is as follows. Cell division protein that is part of the divisome complex and is recruited early to the Z-ring. Probably stimulates Z-ring formation, perhaps through the cross-linking of FtsZ protofilaments. Its function overlaps with FtsA. This Listeria welshimeri serovar 6b (strain ATCC 35897 / DSM 20650 / CCUG 15529 / CIP 8149 / NCTC 11857 / SLCC 5334 / V8) protein is Cell division protein SepF.